A 916-amino-acid chain; its full sequence is Translation initiation factor IF-2 (916 aa).

The interval 1–325 (MTDSNDDKTL…QEKFRRSQVQ (325 aa)) is disordered. Residues 60 to 91 (ITPATPAAPVRAAEPAPAPAQARPQQSTPAPR) are compositionally biased toward low complexity. Residues 97–108 (GQANQRPQQSYQ) show a composition bias toward polar residues. Positions 125–182 (SPEEMDARRRALAESQARDAQDAIRRAEEEKRRAAEEAVRKAAEAEEAARRAVEEAAR) are enriched in basic and acidic residues. 2 stretches are compositionally biased toward low complexity: residues 183–209 (QAEAAAAAAAEPAVTAPAPAPVTAEAR) and 229–243 (DGAAARPAPGAPAAV). A tr-type G domain is found at 414–581 (SRPPVVTIMG…AVLLQAEILD (168 aa)). Positions 423–430 (GHVDHGKT) are G1. 423–430 (GHVDHGKT) contacts GTP. A G2 region spans residues 448 to 452 (GITQH). Residues 469–472 (DTPG) are G3. GTP contacts are provided by residues 469–473 (DTPGH) and 523–526 (NKID). The segment at 523-526 (NKID) is G4. Positions 559–561 (SAK) are G5.

It belongs to the TRAFAC class translation factor GTPase superfamily. Classic translation factor GTPase family. IF-2 subfamily.

It localises to the cytoplasm. In terms of biological role, one of the essential components for the initiation of protein synthesis. Protects formylmethionyl-tRNA from spontaneous hydrolysis and promotes its binding to the 30S ribosomal subunits. Also involved in the hydrolysis of GTP during the formation of the 70S ribosomal complex. This Rhizobium etli (strain ATCC 51251 / DSM 11541 / JCM 21823 / NBRC 15573 / CFN 42) protein is Translation initiation factor IF-2.